A 724-amino-acid polypeptide reads, in one-letter code: WW domain-containing protein ZK1098.1 (724 aa).

2 consecutive WW domains span residues 78-111 (PSVE…KPDV) and 123-156 (QPQQ…KPDG). 6 FF domains span residues 224-282 (KKRQ…WKVQ), 295-349 (IKKS…CIDF), 353-422 (RDKE…HIKQ), 442-502 (QRKV…FVED), 507-562 (YTED…LIEK), and 578-632 (KRRL…YKNG). Positions 626-724 (FNHYKNGTSG…KRKRRESEAD (99 aa)) are disordered. Residues 630–639 (KNGTSGTTAG) show a composition bias toward polar residues. Basic residues predominate over residues 645 to 657 (KKKKKKDKKKKNK). Residues 681 to 692 (SKEDRMDDEERG) show a composition bias toward basic and acidic residues. The span at 693–703 (KKSKKSRKRSP) shows a compositional bias: basic residues.

This chain is WW domain-containing protein ZK1098.1, found in Caenorhabditis elegans.